We begin with the raw amino-acid sequence, 92 residues long: UPF0223 protein SGO_1052 (92 aa).

The protein belongs to the UPF0223 family.

The protein is UPF0223 protein SGO_1052 of Streptococcus gordonii (strain Challis / ATCC 35105 / BCRC 15272 / CH1 / DL1 / V288).